The chain runs to 344 residues: Dihydroorotase (344 aa).

His14 and His16 together coordinate Zn(2+). Substrate contacts are provided by residues 16 to 18 and Asn42; that span reads HLR. Zn(2+)-binding residues include Lys99, His136, and His174. An N6-carboxylysine modification is found at Lys99. His136 serves as a coordination point for substrate. Leu219 is a substrate binding site. Residue Asp247 participates in Zn(2+) binding. Asp247 is a catalytic residue. Substrate-binding residues include His251 and Ala263.

This sequence belongs to the metallo-dependent hydrolases superfamily. DHOase family. Class II DHOase subfamily. Homodimer. The cofactor is Zn(2+).

It catalyses the reaction (S)-dihydroorotate + H2O = N-carbamoyl-L-aspartate + H(+). The protein operates within pyrimidine metabolism; UMP biosynthesis via de novo pathway; (S)-dihydroorotate from bicarbonate: step 3/3. Catalyzes the reversible cyclization of carbamoyl aspartate to dihydroorotate. This is Dihydroorotase from Teredinibacter turnerae (strain ATCC 39867 / T7901).